The sequence spans 157 residues: UPF0225 protein PMI1492 (157 aa).

It belongs to the UPF0225 family.

The sequence is that of UPF0225 protein PMI1492 from Proteus mirabilis (strain HI4320).